We begin with the raw amino-acid sequence, 76 residues long: Conotoxin ArMKLT2-032 (76 aa).

A signal peptide spans 1–22 (MKLTCVLIIAVLFLTACQLTTG). The propeptide occupies 23 to 46 (ETYSRGEQKDHALRSTDKNSKLTR). A Pyrrolidone carboxylic acid modification is found at glutamine 47. 3 disulfide bridges follow: cysteine 48/cysteine 62, cysteine 55/cysteine 66, and cysteine 61/cysteine 73.

The protein belongs to the conotoxin O1 superfamily. Expressed by the venom duct.

It is found in the secreted. The protein is Conotoxin ArMKLT2-032 of Conus arenatus (Sand-dusted cone).